Here is an 811-residue protein sequence, read N- to C-terminus: DNA mismatch repair protein MutS (811 aa).

An ATP-binding site is contributed by 583-590; sequence GPNMAGKS.

Belongs to the DNA mismatch repair MutS family.

Its function is as follows. This protein is involved in the repair of mismatches in DNA. It is possible that it carries out the mismatch recognition step. This protein has a weak ATPase activity. This chain is DNA mismatch repair protein MutS, found in Thermus thermophilus (strain ATCC BAA-163 / DSM 7039 / HB27).